The sequence spans 228 residues: Translin (228 aa).

The DNA/RNA binding stretch occupies residues 86-90; sequence RFHEH. Positions 177-198 are leucine-zipper; that stretch reads LDSGFRLLNLKNDSLRKRYDGL. Lys-187 carries the post-translational modification N6-acetyllysine. The residue at position 190 (Ser-190) is a Phosphoserine. Lys-199 is modified (N6-acetyllysine).

This sequence belongs to the translin family. In terms of assembly, ring-shaped heterooctamer of six TSN and two TSNAX subunits, DNA/RNA binding occurs inside the ring.

Its subcellular location is the cytoplasm. It is found in the nucleus. Its function is as follows. DNA-binding protein that specifically recognizes consensus sequences at the breakpoint junctions in chromosomal translocations, mostly involving immunoglobulin (Ig)/T-cell receptor gene segments. Seems to recognize single-stranded DNA ends generated by staggered breaks occurring at recombination hot spots. Exhibits both single-stranded and double-stranded endoribonuclease activity. May act as an activator of RNA-induced silencing complex (RISC) by facilitating endonucleolytic cleavage of the siRNA passenger strand. This Pongo abelii (Sumatran orangutan) protein is Translin (TSN).